The primary structure comprises 299 residues: Homoserine O-acetyltransferase (299 aa).

The Acyl-thioester intermediate role is filled by cysteine 142. Lysine 163 and serine 192 together coordinate substrate. Histidine 235 acts as the Proton acceptor in catalysis. Residue glutamate 237 is part of the active site. Position 249 (arginine 249) interacts with substrate.

Belongs to the MetA family.

The protein resides in the cytoplasm. It carries out the reaction L-homoserine + acetyl-CoA = O-acetyl-L-homoserine + CoA. Its pathway is amino-acid biosynthesis; L-methionine biosynthesis via de novo pathway; O-acetyl-L-homoserine from L-homoserine: step 1/1. Its function is as follows. Transfers an acetyl group from acetyl-CoA to L-homoserine, forming acetyl-L-homoserine. This Synechococcus sp. (strain ATCC 27144 / PCC 6301 / SAUG 1402/1) (Anacystis nidulans) protein is Homoserine O-acetyltransferase.